Here is a 197-residue protein sequence, read N- to C-terminus: Recombination protein RecR (197 aa).

The C4-type zinc finger occupies 54 to 69; it reads CQQCNNYTEQTLCTLC. The 96-residue stretch at 77–172 folds into the Toprim domain; the sequence is TLLCVVESPA…NISQLAHGIP (96 aa).

It belongs to the RecR family.

Its function is as follows. May play a role in DNA repair. It seems to be involved in an RecBC-independent recombinational process of DNA repair. It may act with RecF and RecO. This Legionella pneumophila (strain Paris) protein is Recombination protein RecR.